The chain runs to 265 residues: Phosphatidylglycerol--prolipoprotein diacylglyceryl transferase (265 aa).

7 helical membrane-spanning segments follow: residues 17 to 37, 59 to 79, 94 to 114, 123 to 143, 177 to 197, 204 to 224, and 238 to 258; these read LAIR…IWLA, MLFY…VLFY, VWKG…AMSI, VLDV…FGRL, SPLY…WLFA, MAVG…TEYF, and ISAG…MLLI. An a 1,2-diacyl-sn-glycero-3-phospho-(1'-sn-glycerol)-binding site is contributed by Arg-142.

This sequence belongs to the Lgt family.

Its subcellular location is the cell inner membrane. It catalyses the reaction L-cysteinyl-[prolipoprotein] + a 1,2-diacyl-sn-glycero-3-phospho-(1'-sn-glycerol) = an S-1,2-diacyl-sn-glyceryl-L-cysteinyl-[prolipoprotein] + sn-glycerol 1-phosphate + H(+). It participates in protein modification; lipoprotein biosynthesis (diacylglyceryl transfer). Functionally, catalyzes the transfer of the diacylglyceryl group from phosphatidylglycerol to the sulfhydryl group of the N-terminal cysteine of a prolipoprotein, the first step in the formation of mature lipoproteins. The sequence is that of Phosphatidylglycerol--prolipoprotein diacylglyceryl transferase from Janthinobacterium sp. (strain Marseille) (Minibacterium massiliensis).